A 570-amino-acid chain; its full sequence is Urease subunit alpha (570 aa).

The 440-residue stretch at 131–570 (GGMDSHIHFI…LPMAQRYFLF (440 aa)) folds into the Urease domain. Histidine 136, histidine 138, and lysine 219 together coordinate Ni(2+). Lysine 219 bears the N6-carboxylysine mark. Residue histidine 221 coordinates substrate. Ni(2+) contacts are provided by histidine 248 and histidine 274. Histidine 322 (proton donor) is an active-site residue. Aspartate 362 is a binding site for Ni(2+).

Belongs to the metallo-dependent hydrolases superfamily. Urease alpha subunit family. In terms of assembly, heterotrimer of UreA (gamma), UreB (beta) and UreC (alpha) subunits. Three heterotrimers associate to form the active enzyme. The cofactor is Ni cation. In terms of processing, carboxylation allows a single lysine to coordinate two nickel ions.

The protein resides in the cytoplasm. It catalyses the reaction urea + 2 H2O + H(+) = hydrogencarbonate + 2 NH4(+). It participates in nitrogen metabolism; urea degradation; CO(2) and NH(3) from urea (urease route): step 1/1. The sequence is that of Urease subunit alpha from Rhizobium meliloti (strain 1021) (Ensifer meliloti).